A 289-amino-acid polypeptide reads, in one-letter code: Splicing factor C9orf78 homolog (289 aa).

Disordered stretches follow at residues 1 to 30 (MRITGKTFRRRRADSESEEDEQESEEVRLK) and 85 to 111 (RGKDKVSEEEDLHLGTSFSAETNRRDE). The segment at 5–58 (GKTFRRRRADSESEEDEQESEEVRLKLEETREVQNLRKRPNGVSAAALLVGEKV) is interaction with SNRNP200. Phosphoserine occurs at positions 15 and 17. Residue Tyr147 is modified to Phosphotyrosine. Residues 232–283 (LNAPIRRNKEEPKARPLRVGDTEKPEPERSPPNRKRPANEKATDDYHYEKFK) show a composition bias toward basic and acidic residues. Positions 232 to 289 (LNAPIRRNKEEPKARPLRVGDTEKPEPERSPPNRKRPANEKATDDYHYEKFKKMNRRY) are disordered. Thr253 carries the phosphothreonine modification. Ser261 carries the phosphoserine modification.

This sequence belongs to the TLS1 family. As to quaternary structure, component of the spliceosome. Interacts with SNRNP200; the interaction is direct. Interacts with PRPF8.

The protein resides in the nucleus. The protein localises to the chromosome. Its subcellular location is the centromere. Functionally, plays a role in pre-mRNA splicing by promoting usage of the upstream 3'-splice site at alternative NAGNAG splice sites; these are sites featuring alternative acceptor motifs separated by only a few nucleotides. May also modulate exon inclusion events. PPlays a role in spliceosomal remodeling by displacing WBP4 from SNRNP200 and may act to inhibit SNRNP200 helicase activity. Binds U5 snRNA. Required for proper chromosome segregation. Not required for splicing of shelterin components. This is Splicing factor C9orf78 homolog from Mus musculus (Mouse).